The following is a 335-amino-acid chain: UPF0065 protein BB4329 (335 aa).

The signal sequence occupies residues 1–39 (MNKNIPAFHRRCHGLVQGLARTLLLAPVLLALSVPAAQA).

The protein belongs to the UPF0065 (bug) family.

It is found in the periplasm. The sequence is that of UPF0065 protein BB4329 from Bordetella bronchiseptica (strain ATCC BAA-588 / NCTC 13252 / RB50) (Alcaligenes bronchisepticus).